The following is a 199-amino-acid chain: Recombination protein RecR (199 aa).

The C4-type zinc finger occupies 56–71 (CSICFNVSQDDQCRIC). One can recognise a Toprim domain in the interval 79–174 (SVLCVVEEYK…RVTRLASGLP (96 aa)).

The protein belongs to the RecR family.

Functionally, may play a role in DNA repair. It seems to be involved in an RecBC-independent recombinational process of DNA repair. It may act with RecF and RecO. The protein is Recombination protein RecR of Nocardioides sp. (strain ATCC BAA-499 / JS614).